Consider the following 186-residue polypeptide: ATP synthase subunit delta (186 aa).

This sequence belongs to the ATPase delta chain family. In terms of assembly, F-type ATPases have 2 components, F(1) - the catalytic core - and F(0) - the membrane proton channel. F(1) has five subunits: alpha(3), beta(3), gamma(1), delta(1), epsilon(1). CF(0) has four main subunits: a(1), b(1), b'(1) and c(10-14). The alpha and beta chains form an alternating ring which encloses part of the gamma chain. F(1) is attached to F(0) by a central stalk formed by the gamma and epsilon chains, while a peripheral stalk is formed by the delta, b and b' chains.

Its subcellular location is the cell inner membrane. Its function is as follows. F(1)F(0) ATP synthase produces ATP from ADP in the presence of a proton or sodium gradient. F-type ATPases consist of two structural domains, F(1) containing the extramembraneous catalytic core and F(0) containing the membrane proton channel, linked together by a central stalk and a peripheral stalk. During catalysis, ATP synthesis in the catalytic domain of F(1) is coupled via a rotary mechanism of the central stalk subunits to proton translocation. Functionally, this protein is part of the stalk that links CF(0) to CF(1). It either transmits conformational changes from CF(0) to CF(1) or is implicated in proton conduction. This chain is ATP synthase subunit delta, found in Rhodopseudomonas palustris (strain HaA2).